The sequence spans 613 residues: Envelope glycoprotein gp95 (613 aa).

Residues Met-1–Ala-62 form the signal peptide. Residues Gly-14–Thr-36 are disordered. At Asp-63–Leu-559 the chain is on the extracellular side. 7 disulfide bridges follow: Cys-87–Cys-506, Cys-121–Cys-151, Cys-191–Cys-252, Cys-265–Cys-275, Cys-360–Cys-377, Cys-417–Cys-453, and Cys-498–Cys-505. N-linked (GlcNAc...) asparagine; by host glycans are attached at residues Asn-120, Asn-140, Asn-157, Asn-177, Asn-230, Asn-264, Asn-271, Asn-297, Asn-303, Asn-313, and Asn-321. Residues Ile-184–Lys-233 form a binding to host receptor region. Residues Met-268–Thr-294 form a binding to host receptor region. N-linked (GlcNAc...) asparagine; by host glycans are attached at residues Asn-388 and Asn-398. The fusion peptide stretch occupies residues Gly-425 to Leu-445. Residue Asn-460 is glycosylated (N-linked (GlcNAc...) asparagine; by host). Residues Leu-481–Gly-497 form an immunosuppression region. Residue Asn-508 is glycosylated (N-linked (GlcNAc...) asparagine; by host). The helical transmembrane segment at Leu-560–Val-580 threads the bilayer. 2 S-palmitoyl cysteine; by host lipidation sites follow: Cys-572 and Cys-575. Residues Cys-581 to Val-613 are Extracellular-facing. Asn-589 is a glycosylation site (N-linked (GlcNAc...) asparagine; by host).

This sequence belongs to the Alpharetroviruses envelope glycoprotein family. Heterodimer with the transmembrane protein. The mature envelope protein (Env) consists of a trimer of SU-TM heterodimers attached by a labile interchain disulfide bond. Interacts with the host cell entry receptor TVB-S3; this interaction allows the viral attachment. In terms of assembly, heterodimer with the surface protein. The mature envelope protein (Env) consists of a trimer of SU-TM heterodimers attached by a labile interchain disulfide bond. Specific enzymatic cleavages in vivo yield mature proteins. Envelope glycoproteins are synthesized as an inactive precursor that is N-glycosylated and processed likely by host cell furin or by a furin-like protease in the Golgi to yield the mature SU and TM proteins. The cleavage site between SU and TM requires the minimal sequence [KR]-X-[KR]-R. In terms of processing, the transmembrane protein is palmitoylated. Palmitoylation is necessary for glycoprotein function and infectivity.

The protein localises to the virion membrane. It localises to the host cell membrane. Functionally, the surface protein (SU) attaches the virus to the host cell entry receptor TVB-S3/CAR1. This interaction triggers the refolding of the transmembrane protein (TM) thereby unmasking its fusion peptide and the formation of a reactive thiolate on Cys-100 to activate its fusogenic potential. Fusion occurs at the host cell plasma membrane. Its function is as follows. The transmembrane protein (TM) acts as a class I viral fusion protein. Under the current model, the protein has at least 3 conformational states: pre-fusion native state, pre-hairpin intermediate state, and post-fusion hairpin state. During viral and target cell membrane fusion, the coiled coil regions (heptad repeats) assume a trimer-of-hairpins structure, positioning the fusion peptide in close proximity to the C-terminal region of the ectodomain. The formation of this structure appears to drive apposition and subsequent fusion of viral and target cell membranes. Membranes fusion leads to delivery of the nucleocapsid into the cytoplasm. The polypeptide is Envelope glycoprotein gp95 (env) (Rous sarcoma virus subgroup B (strain Schmidt-Ruppin) (RSV-SR-B)).